We begin with the raw amino-acid sequence, 191 residues long: UPF0312 protein PSPA7_0523 (191 aa).

Residues 1-23 form the signal peptide; that stretch reads MLKKTLAALALGSALFTAGQAMA.

This sequence belongs to the UPF0312 family. Type 1 subfamily.

It localises to the periplasm. The polypeptide is UPF0312 protein PSPA7_0523 (Pseudomonas paraeruginosa (strain DSM 24068 / PA7) (Pseudomonas aeruginosa (strain PA7))).